The sequence spans 465 residues: uncharacterized protein (465 aa).

Helical transmembrane passes span 19-39 (VLGP…GEYM), 50-70 (MIAG…VAMI), 91-111 (IVGP…YTML), 140-160 (FIVL…LATL), 164-184 (LVIT…VQFG), 201-221 (PYGW…YLGI), 244-264 (AGIM…SGLM), 288-308 (LMVL…NGCI), 342-362 (IVFL…DQVV), 363-383 (TFSI…MVMF), and 403-423 (LPTV…FLGY).

This sequence belongs to the amino acid-polyamine-organocation (APC) superfamily.

It is found in the cell membrane. Functionally, probable amino-acid or metabolite transport protein. This is an uncharacterized protein from Rhizobium meliloti (strain 1021) (Ensifer meliloti).